Here is a 412-residue protein sequence, read N- to C-terminus: Lysosomal phospholipase A and acyltransferase (412 aa).

Positions 1-33 (MGLHLRPYRVGLLPDGLLFLLLLLMLLADPALP) are cleaved as a signal peptide. Position 46 (Asp46) interacts with substrate. A disulfide bridge links Cys65 with Cys89. Asn99 carries N-linked (GlcNAc...) asparagine glycosylation. The Acyl-ester intermediate role is filled by Ser198. Ser198 is a Zn(2+) binding site. Met199 is a substrate binding site. 2 N-linked (GlcNAc...) asparagine glycosylation sites follow: Asn273 and Asn289. The Zn(2+) site is built by Asp340 and Cys355. Active-site charge relay system residues include Asp360 and His392. Residue His392 participates in Zn(2+) binding. Asn398 is a glycosylation site (N-linked (GlcNAc...) asparagine).

The protein belongs to the AB hydrolase superfamily. Lipase family. In terms of processing, N-glycosylated. N-glycosylation is important for maturation of the enzyme and normal subcellular location. As to expression, detected in blood plasma (at protein level). Ubiquitous. Highly expressed in heart, placenta, skeletal muscle, kidney and pancreas. Detected at lower levels in spleen, thymus, prostate, testis, ovary, small intestine, colon and peripheral blood leukocytes.

The protein localises to the lysosome. Its subcellular location is the secreted. The protein resides in the membrane. The enzyme catalyses a 1,2-diacyl-sn-glycero-3-phosphocholine + H2O = a 2-acyl-sn-glycero-3-phosphocholine + a fatty acid + H(+). It carries out the reaction 1-hexadecanoyl-2-(9Z-octadecenoyl)-sn-glycero-3-phosphocholine + H2O = 2-(9Z-octadecenoyl)-sn-glycero-3-phosphocholine + hexadecanoate + H(+). It catalyses the reaction 1-hexadecanoyl-2-glutaroyl-sn-glycero-3-phosphocholine + H2O = 2-glutaroyl-sn-glycero-3-phosphocholine + hexadecanoate + H(+). The catalysed reaction is 1-hexadecanoyl-2-nonadioyl-sn-glycero-3-phosphocholine + H2O = 2-nonadioyl-sn-glycero-3-phosphocholine + hexadecanoate + H(+). The enzyme catalyses 1-hexadecanoyl-2-(5-oxopentanoyl)-sn-glycero-3-phosphocholine + H2O = 2-(5-oxopentanoyl)-sn-glycero-3-phosphocholine + hexadecanoate + H(+). It carries out the reaction 1-hexadecanoyl-2-(9-oxononanoyl)-sn-glycero-3-phosphocholine + H2O = 2-(9-oxononanoyl)-sn-glycero-3-phosphocholine + hexadecanoate + H(+). It catalyses the reaction 1,2-dihexadecanoyl-sn-glycero-3-phosphocholine + H2O = 2-hexadecanoyl-sn-glycero-3-phosphocholine + hexadecanoate + H(+). The catalysed reaction is a 1,2-diacyl-sn-glycero-3-phosphocholine + H2O = a 1-acyl-sn-glycero-3-phosphocholine + a fatty acid + H(+). The enzyme catalyses 1,2-di-(9Z-octadecenoyl)-sn-glycero-3-phosphocholine + H2O = 1-(9Z-octadecenoyl)-sn-glycero-3-phosphocholine + (9Z)-octadecenoate + H(+). It carries out the reaction 1-hexadecanoyl-2-(9Z-octadecenoyl)-sn-glycero-3-phosphocholine + H2O = 1-hexadecanoyl-sn-glycero-3-phosphocholine + (9Z)-octadecenoate + H(+). It catalyses the reaction 1,2-dihexadecanoyl-sn-glycero-3-phosphocholine + H2O = 1-hexadecanoyl-sn-glycero-3-phosphocholine + hexadecanoate + H(+). The catalysed reaction is a 1-acyl-sn-glycero-3-phosphocholine + H2O = sn-glycerol 3-phosphocholine + a fatty acid + H(+). The enzyme catalyses 1-hexadecanoyl-sn-glycero-3-phosphocholine + H2O = sn-glycerol 3-phosphocholine + hexadecanoate + H(+). It carries out the reaction N-(acetyl)-sphing-4-enine + a 1,2-diacyl-sn-glycero-3-phosphoethanolamine = 1-O-acyl-N-(acetyl)-sphing-4-enine + a 2-acyl-sn-glycero-3-phosphoethanolamine. It catalyses the reaction 1-hexadecanoyl-2-(9Z-octadecenoyl)-sn-glycero-3-phosphoethanolamine + N-(acetyl)-sphing-4-enine = 2-(9Z-octadecenoyl)-sn-glycero-3-phosphoethanolamine + 1-hexadecanoyl-N-(acetyl)-sphing-4-enine. The catalysed reaction is 1-hexadecanoyl-2-(9Z,12Z-octadecadienoyl)-sn-glycero-3-phosphoethanolamine + N-(acetyl)-sphing-4-enine = 2-(9Z,12Z)-octadecadienoyl-sn-glycero-3-phosphoethanolamine + 1-hexadecanoyl-N-(acetyl)-sphing-4-enine. The enzyme catalyses 1-hexadecanoyl-2-(5Z,8Z,11Z,14Z-eicosatetraenoyl)-sn-glycero-3-phosphoethanolamine + N-(acetyl)-sphing-4-enine = 2-(5Z,8Z,11Z,14Z)-eicosatetraenoyl-sn-glycero-3-phosphoethanolamine + 1-hexadecanoyl-N-(acetyl)-sphing-4-enine. It carries out the reaction N-(acetyl)-sphing-4-enine + a 1,2-diacyl-sn-glycero-3-phosphoethanolamine = 1-O-acyl-N-(acetyl)-sphing-4-enine + a 1-acyl-sn-glycero-3-phosphoethanolamine. It catalyses the reaction 1-hexadecanoyl-2-(9Z-octadecenoyl)-sn-glycero-3-phosphoethanolamine + N-(acetyl)-sphing-4-enine = 1-(9Z-octadecenoyl)-N-(acetyl)-sphing-4-enine + 1-hexadecanoyl-sn-glycero-3-phosphoethanolamine. The catalysed reaction is 1-hexadecanoyl-2-(9Z,12Z-octadecadienoyl)-sn-glycero-3-phosphoethanolamine + N-(acetyl)-sphing-4-enine = 1-(9Z,12Z-octadecadienoyl)-N-acetylsphing-4-enine + 1-hexadecanoyl-sn-glycero-3-phosphoethanolamine. The enzyme catalyses 1-hexadecanoyl-2-(5Z,8Z,11Z,14Z-eicosatetraenoyl)-sn-glycero-3-phosphoethanolamine + N-(acetyl)-sphing-4-enine = 1-(5Z,8Z,11Z,14Z)-eicosatetraenoyl-N-(acetyl)-sphing-4-enine + 1-hexadecanoyl-sn-glycero-3-phosphoethanolamine. It carries out the reaction N-(acetyl)-sphing-4-enine + a 1,2-diacyl-sn-glycero-3-phosphocholine = 1-O-acyl-N-(acetyl)-sphing-4-enine + a 1-acyl-sn-glycero-3-phosphocholine. It catalyses the reaction 1-hexadecanoyl-2-(9Z-octadecenoyl)-sn-glycero-3-phosphocholine + N-(acetyl)-sphing-4-enine = 1-(9Z-octadecenoyl)-N-(acetyl)-sphing-4-enine + 1-hexadecanoyl-sn-glycero-3-phosphocholine. The catalysed reaction is 1-hexadecanoyl-2-(9Z,12Z-octadecadienoyl)-sn-glycero-3-phosphocholine + N-(acetyl)-sphing-4-enine = 1-(9Z,12Z-octadecadienoyl)-N-acetylsphing-4-enine + 1-hexadecanoyl-sn-glycero-3-phosphocholine. The enzyme catalyses 1-hexadecanoyl-2-(5Z,8Z,11Z,14Z-eicosatetraenoyl)-sn-glycero-3-phosphocholine + N-(acetyl)-sphing-4-enine = 1-(5Z,8Z,11Z,14Z)-eicosatetraenoyl-N-(acetyl)-sphing-4-enine + 1-hexadecanoyl-sn-glycero-3-phosphocholine. It carries out the reaction 1-hexadecanoyl-2-(4Z,7Z,10Z,13Z,16Z,19Z-docosahexaenoyl)-sn-glycero-3-phosphocholine + N-(acetyl)-sphing-4-enine = 1-(4Z,7Z,10Z,13Z,16Z,19Z-docosahexaenoyl)-N-(acetyl)-sphing-4-enine + 1-hexadecanoyl-sn-glycero-3-phosphocholine. It catalyses the reaction 1-octadecanoyl-2-(9Z-octadecenoyl)-sn-glycero-3-phosphocholine + N-(acetyl)-sphing-4-enine = 1-(9Z-octadecenoyl)-N-(acetyl)-sphing-4-enine + 1-octadecanoyl-sn-glycero-3-phosphocholine. The catalysed reaction is 1-octadecanoyl-2-(9Z,12Z)-octadecadienoyl-sn-glycero-3-phosphocholine + N-(acetyl)-sphing-4-enine = 1-(9Z,12Z-octadecadienoyl)-N-acetylsphing-4-enine + 1-octadecanoyl-sn-glycero-3-phosphocholine. The enzyme catalyses 1-octadecanoyl-2-(5Z,8Z,11Z,14Z-eicosatetraenoyl)-sn-glycero-3-phosphocholine + N-(acetyl)-sphing-4-enine = 1-(5Z,8Z,11Z,14Z)-eicosatetraenoyl-N-(acetyl)-sphing-4-enine + 1-octadecanoyl-sn-glycero-3-phosphocholine. It carries out the reaction 1-(9Z-octadecenoyl)-2-hexadecanoyl-sn-glycero-3-phosphocholine + N-(acetyl)-sphing-4-enine = 1-hexadecanoyl-N-(acetyl)-sphing-4-enine + 1-(9Z-octadecenoyl)-sn-glycero-3-phosphocholine. It catalyses the reaction 1-(9Z)-octadecenoyl-2-octadecanoyl-sn-glycero-3-phosphocholine + N-(acetyl)-sphing-4-enine = 1-octadecanoyl-N-(acetyl)-sphing-4-enine + 1-(9Z-octadecenoyl)-sn-glycero-3-phosphocholine. The catalysed reaction is 1,2-di-(9Z-octadecenoyl)-sn-glycero-3-phosphocholine + N-(acetyl)-sphing-4-enine = 1-(9Z-octadecenoyl)-N-(acetyl)-sphing-4-enine + 1-(9Z-octadecenoyl)-sn-glycero-3-phosphocholine. The enzyme catalyses N-(acetyl)-sphing-4-enine + a 1,2-diacyl-sn-glycero-3-phosphocholine = 1-O-acyl-N-(acetyl)-sphing-4-enine + a 2-acyl-sn-glycero-3-phosphocholine. It carries out the reaction 1-hexadecanoyl-2-(9Z-octadecenoyl)-sn-glycero-3-phosphocholine + N-(acetyl)-sphing-4-enine = 1-hexadecanoyl-N-(acetyl)-sphing-4-enine + 2-(9Z-octadecenoyl)-sn-glycero-3-phosphocholine. It catalyses the reaction 1-hexadecanoyl-2-(9Z,12Z-octadecadienoyl)-sn-glycero-3-phosphocholine + N-(acetyl)-sphing-4-enine = 2-(9Z,12Z-octadecadienoyl)-sn-glycero-3-phosphocholine + 1-hexadecanoyl-N-(acetyl)-sphing-4-enine. The catalysed reaction is 1-hexadecanoyl-2-(5Z,8Z,11Z,14Z-eicosatetraenoyl)-sn-glycero-3-phosphocholine + N-(acetyl)-sphing-4-enine = 1-hexadecanoyl-N-(acetyl)-sphing-4-enine + 2-(5Z,8Z,11Z,14Z)-eicosatetraenoyl-sn-glycero-3-phosphocholine. The enzyme catalyses 1-hexadecanoyl-2-(4Z,7Z,10Z,13Z,16Z,19Z-docosahexaenoyl)-sn-glycero-3-phosphocholine + N-(acetyl)-sphing-4-enine = 2-(4Z,7Z,10Z,13Z,16Z,19Z-docosahexaenoyl)-sn-glycero-3-phosphocholine + 1-hexadecanoyl-N-(acetyl)-sphing-4-enine. It carries out the reaction 1-hexadecanoyl-2-nonadioyl-sn-glycero-3-phosphocholine + N-(acetyl)-sphing-4-enine = 2-nonadioyl-sn-glycero-3-phosphocholine + 1-hexadecanoyl-N-(acetyl)-sphing-4-enine. It catalyses the reaction 1-octadecanoyl-2-(9Z-octadecenoyl)-sn-glycero-3-phosphocholine + N-(acetyl)-sphing-4-enine = 1-octadecanoyl-N-(acetyl)-sphing-4-enine + 2-(9Z-octadecenoyl)-sn-glycero-3-phosphocholine. The catalysed reaction is 1-octadecanoyl-2-(5Z,8Z,11Z,14Z-eicosatetraenoyl)-sn-glycero-3-phosphocholine + N-(acetyl)-sphing-4-enine = 1-octadecanoyl-N-(acetyl)-sphing-4-enine + 2-(5Z,8Z,11Z,14Z)-eicosatetraenoyl-sn-glycero-3-phosphocholine. The enzyme catalyses 1-(9Z-octadecenoyl)-2-hexadecanoyl-sn-glycero-3-phosphocholine + N-(acetyl)-sphing-4-enine = 1-(9Z-octadecenoyl)-N-(acetyl)-sphing-4-enine + 2-hexadecanoyl-sn-glycero-3-phosphocholine. It carries out the reaction 1-(9Z)-octadecenoyl-2-octadecanoyl-sn-glycero-3-phosphocholine + N-(acetyl)-sphing-4-enine = 2-octadecanoyl-sn-glycero-3-phosphocholine + 1-(9Z-octadecenoyl)-N-(acetyl)-sphing-4-enine. It catalyses the reaction a 1,2-diacyl-sn-glycero-3-phospho-L-serine + N-(acetyl)-sphing-4-enine = a 2-acyl-sn-glycero-3-phospho-L-serine + 1-O-acyl-N-(acetyl)-sphing-4-enine. The catalysed reaction is 1-octadecanoyl-2-(9Z-octadecenoyl)-sn-glycero-3-phospho-L-serine + N-(acetyl)-sphing-4-enine = 2-(9Z-octadecenoyl)-sn-glycero-3-phospho-L-serine + 1-octadecanoyl-N-(acetyl)-sphing-4-enine. The enzyme catalyses a 1,2-diacyl-sn-glycero-3-phospho-L-serine + N-(acetyl)-sphing-4-enine = 1-O-acyl-N-(acetyl)-sphing-4-enine + a 1-acyl-sn-glycero-3-phospho-L-serine. It carries out the reaction 1-octadecanoyl-2-(9Z-octadecenoyl)-sn-glycero-3-phospho-L-serine + N-(acetyl)-sphing-4-enine = 1-octadecanoyl-sn-glycero-3-phosphoserine + 1-(9Z-octadecenoyl)-N-(acetyl)-sphing-4-enine. It catalyses the reaction a 1,2-diacyl-sn-glycero-3-phospho-(1'-sn-glycerol) + N-(acetyl)-sphing-4-enine = 2-acyl-sn-glycero-3-phospho-(1'-sn-glycerol) + 1-O-acyl-N-(acetyl)-sphing-4-enine. The catalysed reaction is 1-octadecanoyl-2-(9Z-octadecenoyl)-sn-glycero-3-phospho-(1'-sn-glycerol) + N-(acetyl)-sphing-4-enine = 2-(9Z-octadecenoyl)-sn-glycero-3-phospho-(1'-sn-glycerol) + 1-octadecanoyl-N-(acetyl)-sphing-4-enine. The enzyme catalyses a 1,2-diacyl-sn-glycero-3-phospho-(1'-sn-glycerol) + N-(acetyl)-sphing-4-enine = 1-O-acyl-N-(acetyl)-sphing-4-enine + 1-acyl-sn-glycero-3-phospho-(1'-sn-glycerol). It carries out the reaction 1-octadecanoyl-2-(9Z-octadecenoyl)-sn-glycero-3-phospho-(1'-sn-glycerol) + N-(acetyl)-sphing-4-enine = 1-octadecanoyl-sn-glycero-3-phospho-(1'-sn-glycerol) + 1-(9Z-octadecenoyl)-N-(acetyl)-sphing-4-enine. It catalyses the reaction an N-acylethanolamine + a 1,2-diacyl-sn-glycero-3-phosphocholine = 2-(acylamino)ethyl fatty acid + a 2-acyl-sn-glycero-3-phosphocholine. The catalysed reaction is an N-acylethanolamine + a 1,2-diacyl-sn-glycero-3-phosphocholine = 2-(acylamino)ethyl fatty acid + a 1-acyl-sn-glycero-3-phosphocholine. The enzyme catalyses N-(5Z,8Z,11Z,14Z-eicosatetraenoyl)-ethanolamine + 1,2-di-(9Z-octadecenoyl)-sn-glycero-3-phosphocholine = 2-[(5Z,8Z,11Z,14Z)-eicosatetraenoylamino]ethyl (9Z)-octadecenoate + (9Z-octadecenoyl)-sn-glycero-3-phosphocholine. It carries out the reaction N-(9Z-octadecenoyl) ethanolamine + 1,2-di-(9Z-octadecenoyl)-sn-glycero-3-phosphocholine = 2-[(9Z)-octadecenoylamino]ethyl (9Z)-octadecenoate + (9Z-octadecenoyl)-sn-glycero-3-phosphocholine. It catalyses the reaction a 3-acyl-sn-glycerol + a 1,2-diacyl-sn-glycero-3-phosphocholine = a 1,3-diacylglycerol + a 1-acyl-sn-glycero-3-phosphocholine. The catalysed reaction is a 3-acyl-sn-glycerol + a 1,2-diacyl-sn-glycero-3-phosphocholine = a 1,3-diacylglycerol + a 2-acyl-sn-glycero-3-phosphocholine. The enzyme catalyses 3-(9Z-octadecenoyl)-sn-glycerol + 1,2-di-(9Z-octadecenoyl)-sn-glycero-3-phosphocholine = 1,3-di-(9Z-octadecenoyl)-glycerol + (9Z-octadecenoyl)-sn-glycero-3-phosphocholine. It carries out the reaction 3-hexadecanoyl-sn-glycerol + 1,2-di-(9Z-octadecenoyl)-sn-glycero-3-phosphocholine = 1-(9Z)-octadecenoyl-3-hexadecanoyl-sn-glycerol + (9Z-octadecenoyl)-sn-glycero-3-phosphocholine. It catalyses the reaction a 1-acyl-sn-glycerol + a 1,2-diacyl-sn-glycero-3-phosphocholine = a 1,3-diacylglycerol + a 2-acyl-sn-glycero-3-phosphocholine. The catalysed reaction is a 1-acyl-sn-glycerol + a 1,2-diacyl-sn-glycero-3-phosphocholine = a 1,3-diacylglycerol + a 1-acyl-sn-glycero-3-phosphocholine. The enzyme catalyses 1-(9Z-octadecenoyl)-sn-glycerol + 1,2-di-(9Z-octadecenoyl)-sn-glycero-3-phosphocholine = 1,3-di-(9Z-octadecenoyl)-glycerol + (9Z-octadecenoyl)-sn-glycero-3-phosphocholine. It carries out the reaction 1-hexadecanoyl-sn-glycerol + 1,2-di-(9Z-octadecenoyl)-sn-glycero-3-phosphocholine = 1-hexadecanoyl-3-(9Z)-octadecenoyl-sn-glycerol + (9Z-octadecenoyl)-sn-glycero-3-phosphocholine. It catalyses the reaction a 2-acylglycerol + a 1,2-diacyl-sn-glycero-3-phosphocholine = a 1,2-diacylglycerol + a 2-acyl-sn-glycero-3-phosphocholine. The catalysed reaction is a 2-acylglycerol + a 1,2-diacyl-sn-glycero-3-phosphocholine = a 1,2-diacylglycerol + a 1-acyl-sn-glycero-3-phosphocholine. The enzyme catalyses 2-hexadecanoylglycerol + 1,2-di-(9Z-octadecenoyl)-sn-glycero-3-phosphocholine = 1-(9Z)-octadecenoyl-2-hexadecanoylglycerol + (9Z-octadecenoyl)-sn-glycero-3-phosphocholine. It carries out the reaction 1-O-alkylglycerol + a 1,2-diacyl-sn-glycero-3-phosphocholine = 1-O-alkyl-3-acylglycerol + a 1-acyl-sn-glycero-3-phosphocholine. It catalyses the reaction 1-O-alkylglycerol + a 1,2-diacyl-sn-glycero-3-phosphocholine = 1-O-alkyl-3-acylglycerol + a 2-acyl-sn-glycero-3-phosphocholine. The catalysed reaction is 1-O-hexadecylglycerol + 1,2-di-(9Z-octadecenoyl)-sn-glycero-3-phosphocholine = 1-O-hexadecyl-3-(9Z)-octadecenoylglycerol + (9Z-octadecenoyl)-sn-glycero-3-phosphocholine. The enzyme catalyses 1-O-alkyl-2-acyl-sn-glycerol + a 1,2-diacyl-sn-glycero-3-phosphocholine = 1-O-alkyl-2,3-diacyl-sn-glycerol + a 2-acyl-sn-glycero-3-phosphocholine. It carries out the reaction 1-O-alkyl-2-acyl-sn-glycerol + a 1,2-diacyl-sn-glycero-3-phosphocholine = 1-O-alkyl-2,3-diacyl-sn-glycerol + a 1-acyl-sn-glycero-3-phosphocholine. It catalyses the reaction 1-O-hexadecyl-2-acetyl-sn-glycerol + 1,2-di-(9Z-octadecenoyl)-sn-glycero-3-phosphocholine = 1-O-hexadecyl-2-acetyl-3-(9Z)-octadecenoyl-sn-glycerol + (9Z-octadecenoyl)-sn-glycero-3-phosphocholine. The catalysed reaction is 1-O-hexadecyl-2-O-methyl-sn-glycerol + 1,2-di-(9Z-octadecenoyl)-sn-glycero-3-phosphocholine = 1-O-hexadecyl-2-O-methyl-3-(9Z)-octadecenoyl-sn-glycerol + (9Z-octadecenoyl)-sn-glycero-3-phosphocholine. The enzyme catalyses a 1,2-diacyl-sn-glycero-3-phosphoethanolamine + H2O = a 1-acyl-sn-glycero-3-phosphoethanolamine + a fatty acid + H(+). It carries out the reaction 1-acyl-2-(5Z,8Z,11Z,14Z)-eicosatetraenoyl-sn-glycero-3-phosphoethanolamine + H2O = a 1-acyl-sn-glycero-3-phosphoethanolamine + (5Z,8Z,11Z,14Z)-eicosatetraenoate + H(+). It catalyses the reaction a 1,2-diacyl-sn-glycero-3-phospho-(1'-sn-glycerol) + H2O = 1-acyl-sn-glycero-3-phospho-(1'-sn-glycerol) + a fatty acid + H(+). The catalysed reaction is 1-hexadecanoyl-2-(9Z-octadecenoyl)-sn-glycero-3-phospho-(1'-sn-glycerol) + H2O = 1-hexadecanoyl-sn-glycero-3-phospho-(1'-sn-glycerol) + (9Z)-octadecenoate + H(+). The enzyme catalyses a 1,2-diacyl-sn-glycero-3-phospho-(1'-sn-glycerol) + H2O = 2-acyl-sn-glycero-3-phospho-(1'-sn-glycerol) + a fatty acid + H(+). It carries out the reaction 1-hexadecanoyl-2-(9Z-octadecenoyl)-sn-glycero-3-phospho-(1'-sn-glycerol) + H2O = 2-(9Z-octadecenoyl)-sn-glycero-3-phospho-(1'-sn-glycerol) + hexadecanoate + H(+). Its activity is regulated as follows. Inhibited by zinc ions at neutral pH. Zinc ions in plasma may keep the enzyme from hydrolyzing inappropriate substrates. Has dual calcium-independent phospholipase and O-acyltransferase activities with a potential role in glycerophospholipid homeostasis and remodeling of acyl groups of lipophilic alcohols present in acidic cellular compartments. Catalyzes hydrolysis of the ester bond of the fatty acyl group attached at sn-1 or sn-2 position of phospholipids (phospholipase A1 or A2 activity) and transfer it to the hydroxyl group at the first carbon of lipophilic alcohols (O-acyltransferase activity). Among preferred fatty acyl donors are phosphatidylcholines, phosphatidylethanolamines, phosphatidylglycerols and phosphatidylserines. Favors sn-2 over sn-1 deacylation of unsaturated fatty acyl groups of phosphatidylcholines, phosphatidylethanolamines, and phosphatidylglycerols. Among preferred fatty acyl acceptors are natural lipophilic alcohols including short-chain ceramide N-acetyl-sphingosine (C2 ceramide), alkylacylglycerols, monoacylglycerols, and acylethanolamides such as anandamide and oleoylethanolamide. Selectively hydrolyzes the sn-1 fatty acyl group of truncated oxidized phospholipids and may play a role in detoxification of reactive oxidized phospholipids during oxidative stress. Required for normal phospholipid degradation in alveolar macrophages with potential implications in the clearance of pulmonary surfactant, which is mainly composed of dipalmitoylphosphatidylcholine (1,2-dihexadecanoyl-sn-glycero-3-phosphocholine). Involved in the first step of bis(monoacylglycero)phosphate (BMP) de novo synthesis from phosphatidylglycerol (1,2-diacyl-sn-glycero-3-phospho-(1'-sn-glycerol), PG). BMP is an important player in cargo sorting and degradation, regulation of cellular cholesterol levels and intercellular communication. At neutral pH, hydrolyzes the sn-1 fatty acyl group of the lysophosphatidylcholines. This Homo sapiens (Human) protein is Lysosomal phospholipase A and acyltransferase.